A 588-amino-acid polypeptide reads, in one-letter code: Glutathione/L-cysteine transport system ATP-binding/permease protein CydD (588 aa).

Over 1–15 the chain is Cytoplasmic; sequence MNKSRQKELTRWLKQ. The next 2 helical transmembrane spans lie at 16 to 36 and 37 to 57; these read QSVISQRWLNISRLLGFVSGI and LIIAQAWFMARILQHMIMENI. The 287-residue stretch at 20 to 306 folds into the ABC transmembrane type-1 domain; it reads SQRWLNISRL…APEFFQPLRD (287 aa). Topologically, residues 58-136 are cytoplasmic; it reads PREALLLPFT…LEQIDDMHDY (79 aa). A helical transmembrane segment spans residues 137-157; that stretch reads YARYLPQMALAVSVPLLIVVA. The Periplasmic portion of the chain corresponds to 158 to 161; it reads IFPS. The helical transmembrane segment at 162 to 182 threads the bilayer; it reads NWAAALILLGTAPLIPLFMAL. The Cytoplasmic portion of the chain corresponds to 183 to 249; that stretch reads VGMGAADANR…MEVLRLAFLS (67 aa). The chain crosses the membrane as a helical span at residues 250–270; sequence SGILEFFTSLSIALVAVYFGF. The Periplasmic portion of the chain corresponds to 271 to 276; it reads SYLGEL. A helical membrane pass occupies residues 277 to 297; that stretch reads DFGHYDTGVTLAAGFLALILA. Residues 298–573 lie on the Cytoplasmic side of the membrane; sequence PEFFQPLRDL…QGRYAELSVA (276 aa). An ABC transporter domain is found at 339–572; that stretch reads EAELASTDPV…EQGRYAELSV (234 aa). Residue 373 to 380 participates in ATP binding; the sequence is LPAGQRAV.

It belongs to the ABC transporter superfamily. Cysteine exporter (TC 3.A.1.129.1) family. Forms a heterodimer with CydC.

It localises to the cell inner membrane. The enzyme catalyses L-cysteine(in) + ATP + H2O = L-cysteine(out) + ADP + phosphate + H(+). The catalysed reaction is glutathione(in) + ATP + H2O = glutathione(out) + ADP + phosphate + H(+). ATPase activity is stimulated by various thiol compounds. The presence of heme leads to a further enhancement of thiol-stimulated ATPase activity, although a large excess of heme inhibits activity. Glutathione transport is inhibited by sodium orthovanadate, an inhibitor of ABC-type transport systems, but not by the proton ionophore carbonyl cyanide m-chlorophenylhydrazone (CCCP). Functionally, part of the ABC transporter complex CydDC that exports the reduced low-molecular-weight thiols cysteine and glutathione to the periplasm. Export of these thiol-containing redox-active molecules may be crucial for redox homeostasis in the periplasm, permitting correct assembly of various respiratory complexes and formation of correct disulfide bonds in periplasmic and secreted proteins. CydD contains transmembrane domains (TMD), which form a pore in the inner membrane, and an ATP-binding domain (NBD), which is responsible for energy generation. Required for the assembly of functional cytochrome bd-type quinol oxidases and periplasmic c-type cytochromes. Overexpression of CydDC under anaerobic conditions also results in the formation of a heme biosynthesis-derived pigment, P-574. CydDC binds heme b, but heme is probably not transported by the complex and instead has a role in regulating ATPase activity. Its function is as follows. Conversely, a more recent study suggests an alternative function of CydDC: authors suggest that CydDC does not mediate the export of L-cysteine but rather reduces cytoplasmic L-cystine to L-cysteine. The principle function of CydDC would be to maintain the reduced state of cytoplasmic L-cysteine, thereby providing an important connection between sulfur metabolism, oxidative stress and resistance to antibiotics. The sequence is that of Glutathione/L-cysteine transport system ATP-binding/permease protein CydD from Escherichia coli (strain K12).